Here is a 2375-residue protein sequence, read N- to C-terminus: CCR4-NOT transcription complex subunit 1 (2375 aa).

Short sequence motifs (LXXLL) lie at residues 153–157 (LPDLL), 181–185 (LHLLL), and 223–227 (LAPLL). Residue Ser318 is modified to Phosphoserine. The LXXLL signature appears at 570-574 (LSMLL). Residues 725-770 (SAAPHTQSMQGFPPNLGSAFSTPQSPAKAFPPLSTPNQTTAFSGIG) form a disordered region. The tract at residues 799–1014 (NNDPFVQRKL…QGSITTPGSI (216 aa)) is interaction with ZFP36. Ser1060 carries the phosphoserine modification. An interaction with CNOT6, CNOT6L, CNOT7 and CNOT8 region spans residues 1089-1604 (EPPENIQEKI…AQPMKQAWAT (516 aa)). Positions 1314–1326 (QLSAPKKDVKQPE) are enriched in basic and acidic residues. The tract at residues 1314 to 1351 (QLSAPKKDVKQPEELPAITTTTTSTTPATSTTCTATVP) is disordered. Residues 1332-1349 (TTTTTSTTPATSTTCTAT) are compositionally biased toward low complexity. 3 consecutive short sequence motifs (LXXLL) follow at residues 1638-1642 (LRSLL), 1941-1945 (LIALL), and 2095-2099 (LRVLL).

The protein belongs to the CNOT1 family. In terms of assembly, component of the CCR4-NOT complex; distinct complexes seem to exist that differ in the participation of probably mutually exclusive catalytic subunits. In the complex, interacts directly with CNOT6, CNOT6L, CNOT7 or CNOT8. Interacts in a ligand-dependent fashion with ESR1 and RXRA. Interacts with NANOS2, TOB1 and ZFP36. Interacts with TNRC6A, TNRC6B or TNRC6C; the interactions are direct. Interacts with YTHDF2; the interaction is direct and promotes recruitment of the CCR4-NOT complex to N6-methyladenosine (m6A)-containing mRNAs, leading to their deadenylation and subsequent degradation. Interacts with EIF4ENIF1/4E-T. Interacts in an RNA-independent manner with BICC1 (via KH domains). Interacts with TEX13A; the interaction may inhibit CNOT1 binding to mRNA and subsequently CNOT1-mediated mRNA degradation.

Its subcellular location is the cytoplasm. It localises to the P-body. The protein resides in the nucleus. In terms of biological role, scaffolding component of the CCR4-NOT complex which is one of the major cellular mRNA deadenylases and is linked to various cellular processes including bulk mRNA degradation, miRNA-mediated repression, translational repression during translational initiation and general transcription regulation. Additional complex functions may be a consequence of its influence on mRNA expression. Its scaffolding function implies its interaction with the catalytic complex module and diverse RNA-binding proteins mediating the complex recruitment to selected mRNA 3'UTRs. Involved in degradation of AU-rich element (ARE)-containing mRNAs probably via association with ZFP36. Mediates the recruitment of the CCR4-NOT complex to miRNA targets and to the RISC complex via association with TNRC6A, TNRC6B or TNRC6C. Acts as a transcriptional repressor. Represses the ligand-dependent transcriptional activation by nuclear receptors. Involved in the maintenance of embryonic stem (ES) cell identity; prevents their differentiation towards extraembryonic trophectoderm lineages. Plays a role in rapid sperm motility via mediating timely mRNA turnover. This chain is CCR4-NOT transcription complex subunit 1 (Cnot1), found in Mus musculus (Mouse).